The primary structure comprises 137 residues: Nucleoside diphosphate kinase (137 aa).

Residues Lys-9, Phe-57, Arg-85, Thr-91, Arg-102, and Asn-112 each contribute to the ATP site. His-115 (pros-phosphohistidine intermediate) is an active-site residue.

Belongs to the NDK family. As to quaternary structure, homotetramer. It depends on Mg(2+) as a cofactor.

The protein localises to the cytoplasm. The catalysed reaction is a 2'-deoxyribonucleoside 5'-diphosphate + ATP = a 2'-deoxyribonucleoside 5'-triphosphate + ADP. It catalyses the reaction a ribonucleoside 5'-diphosphate + ATP = a ribonucleoside 5'-triphosphate + ADP. Functionally, major role in the synthesis of nucleoside triphosphates other than ATP. The ATP gamma phosphate is transferred to the NDP beta phosphate via a ping-pong mechanism, using a phosphorylated active-site intermediate. This chain is Nucleoside diphosphate kinase, found in Citrifermentans bemidjiense (strain ATCC BAA-1014 / DSM 16622 / JCM 12645 / Bem) (Geobacter bemidjiensis).